The primary structure comprises 792 residues: Putative cellulose synthase-like protein H3 (792 aa).

Helical transmembrane passes span 25-45 and 55-75; these read AWML…VRRA and VGGA…FVWL. The disordered stretch occupies residues 132-154; it reads GRHVRDDGGPGARAAGGDGEQGA. Residues 140–151 show a composition bias toward gly residues; it reads GPGARAAGGDGE. Active-site residues include Asp-181 and Asp-501. A run of 6 helical transmembrane segments spans residues 579–599, 613–632, 650–670, 706–726, 739–759, and 768–788; these read VWAV…YCLL, FNIT…VEYM, IISA…TIGL, VFIP…IGTW, GPGI…LPFV, and YGIP…FLFC.

This sequence belongs to the glycosyltransferase 2 family. Plant cellulose synthase-like H subfamily.

The protein localises to the golgi apparatus membrane. Functionally, thought to be a Golgi-localized beta-glycan synthase that polymerize the backbones of noncellulosic polysaccharides (hemicelluloses) of plant cell wall. This chain is Putative cellulose synthase-like protein H3 (CSLH3), found in Oryza sativa subsp. japonica (Rice).